Here is a 1066-residue protein sequence, read N- to C-terminus: Elongation factor 3 (1066 aa).

HEAT repeat units lie at residues 112-149 (FIFE…VMSP), 151-188 (AAQQ…ACPE), 192-229 (ALMP…LISN), 231-268 (DIER…EVDS), 269-306 (ATLA…LVDN), and 312-353 (PFLG…VTGD). Thr-418 contacts ADP. ABC transporter domains are found at residues 454 to 672 (EEGE…YAEL) and 699 to 1015 (IKMK…KKEE). The ADP site is built by Asn-735, Glu-944, Asn-947, and His-973. The disordered stretch occupies residues 997 to 1066 (GHDWTESNSK…YDSADELEDL (70 aa)). Over residues 1042–1054 (RKAKKDRMARKKA) the composition is skewed to basic residues.

This sequence belongs to the ABC transporter superfamily. ABCF family. EF3 subfamily.

It localises to the cytoplasm. Its subcellular location is the cytosol. The catalysed reaction is ATP + H2O = ADP + phosphate + H(+). It participates in protein biosynthesis; polypeptide chain elongation. Its function is as follows. Ribosome-dependent ATPase that functions in cytoplasmic translation elongation. Required for the ATP-dependent release of deacylated tRNA from the ribosomal E-site during protein biosynthesis. Stimulates the eEF1A-dependent binding of aminoacyl-tRNA to the ribosomal A-site, which has reduced affinity for tRNA as long as the E-site is occupied. Assists translation termination by stimulating the release of nascent protein from the ribosome by release factors. In Mycosarcoma maydis (Corn smut fungus), this protein is Elongation factor 3.